Reading from the N-terminus, the 704-residue chain is MEETFVPFEGIKNDLKGRLMCYKQDWTGGFKAGFRILAPTTYIFFASAIPVISFGEQLERSTDGVLTAVQTLASTAICGMIHSIIGGQPLLILGVAEPTVIMYTFMFNFAKARPELGRDLFLAWSGWVCVWTALMLFVLAICGACSIINRFTRVAGELFGLLIAMLFMQQAIKGLVDEFRIPERENQKLKEFLPSWRFANGMFALVLSFGLLLTGLRSRKARSWRYGTGWLRSLIADYGVPLMVLVWTGVSYIPAGDVPKGIPRRLFSPNPWSPGAYGNWTVVKEMLDVPIVYIIGAFIPASMIAVLYYFDHSVASQLAQQKEFNLRKPSSYHYDLLLLGFLTLMCGLLGVPPSNGVIPQSPMHTKSLATLKYQLLRNRLVATARRSIKTNASLGQLYDNMQEAYHHMQTPLVYQQPQGLKELKESTIQATTFTGNLNAPVDETLFDIEKEIDDLLPVEVKEQRVSNLLQSTMVGGCVAAMPILKMIPTSVLWGYFAFMAIESLPGNQFWERILLLFTAPSRRFKVLEDYHATFVETVPFKTIAMFTLFQTTYLLICFGLTWIPIAGVMFPLMIMFLIPVRQYLLPRFFKGAHLQDLDAAEYEEAPALPFNLAAETEIGSTTSYPGDLEILDEVMTRSRGEFRHTSSPKVTSSSSTPVNNRSLSQVFSPRVSGIRLGQMSPRVVGNSPKPASCGRSPLNQSSSN.

Residues 1 to 35 lie on the Cytoplasmic side of the membrane; that stretch reads MEETFVPFEGIKNDLKGRLMCYKQDWTGGFKAGFR. The chain crosses the membrane as a helical span at residues 36-56; that stretch reads ILAPTTYIFFASAIPVISFGE. The Extracellular portion of the chain corresponds to 57–75; that stretch reads QLERSTDGVLTAVQTLAST. Residues 76-96 form a helical membrane-spanning segment; the sequence is AICGMIHSIIGGQPLLILGVA. Residues 97–120 are Cytoplasmic-facing; it reads EPTVIMYTFMFNFAKARPELGRDL. The helical transmembrane segment at 121 to 141 threads the bilayer; that stretch reads FLAWSGWVCVWTALMLFVLAI. The Extracellular portion of the chain corresponds to 142-155; that stretch reads CGACSIINRFTRVA. The chain crosses the membrane as a helical span at residues 156–176; it reads GELFGLLIAMLFMQQAIKGLV. At 177-195 the chain is on the cytoplasmic side; that stretch reads DEFRIPERENQKLKEFLPS. Residues 196 to 216 traverse the membrane as a helical segment; it reads WRFANGMFALVLSFGLLLTGL. Residues 217-233 are Extracellular-facing; it reads RSRKARSWRYGTGWLRS. The chain crosses the membrane as a helical span at residues 234-254; the sequence is LIADYGVPLMVLVWTGVSYIP. The Cytoplasmic segment spans residues 255 to 289; it reads AGDVPKGIPRRLFSPNPWSPGAYGNWTVVKEMLDV. The helical transmembrane segment at 290–310 threads the bilayer; it reads PIVYIIGAFIPASMIAVLYYF. The Extracellular portion of the chain corresponds to 311–337; it reads DHSVASQLAQQKEFNLRKPSSYHYDLL. The chain crosses the membrane as a helical span at residues 338–358; it reads LLGFLTLMCGLLGVPPSNGVI. The Cytoplasmic segment spans residues 359 to 480; it reads PQSPMHTKSL…STMVGGCVAA (122 aa). A helical membrane pass occupies residues 481-501; the sequence is MPILKMIPTSVLWGYFAFMAI. Residues 502–557 are Extracellular-facing; that stretch reads ESLPGNQFWERILLLFTAPSRRFKVLEDYHATFVETVPFKTIAMFTLFQTTYLLIC. A helical membrane pass occupies residues 558–578; sequence FGLTWIPIAGVMFPLMIMFLI. The Cytoplasmic portion of the chain corresponds to 579–704; it reads PVRQYLLPRF…RSPLNQSSSN (126 aa). The tract at residues 641 to 704 is disordered; sequence EFRHTSSPKV…RSPLNQSSSN (64 aa). Over residues 647-664 the composition is skewed to low complexity; that stretch reads SPKVTSSSSTPVNNRSLS.

The protein belongs to the anion exchanger (TC 2.A.31.3) family. As to expression, expressed in proximal side of various root cells, notably in the columella, lateral root cap, epidermis and endodermis in tip and elongation zones of the root. Also detected in the epidermis, cortex, endodermis, and stele cells of the root hair zone. Observed in cotyledons and hypocotyls.

The protein resides in the cell membrane. Its subcellular location is the endosome membrane. It is found in the vacuole membrane. In terms of biological role, efflux-type boron (B) transporter for xylem loading, responsive of boron translocation from roots to shoots under boron limitation. Boron is essential for maintaining the integrity of plants cell walls. This is Boron transporter 1 from Arabidopsis thaliana (Mouse-ear cress).